The sequence spans 258 residues: MKNYLLQIEYFGKNYCGWQRQSHSPSVQEELEKALSKIANQNIEVTCAGRTDTGVHATSQIVNFYSNADRPLSAWQRGVNALLPQDIKILAVQQVDNNFNSRFTAINRTYNYIIYNSATSSPIFAEHCLWENRELDIDKMNQACEYLLGEQDFSSFRSSQCQSNTPFRNIQKAEFIKQGSFIVFEVVGNAFLHHMIRNLVGSLLKVGLGFESPEWIKVVLEVKDRTQAAETAKAHGLYFVGVEYPEFSFKRQIIKLFC.

Asp-52 acts as the Nucleophile in catalysis. Tyr-110 lines the substrate pocket.

Belongs to the tRNA pseudouridine synthase TruA family. Homodimer.

The enzyme catalyses uridine(38/39/40) in tRNA = pseudouridine(38/39/40) in tRNA. In terms of biological role, formation of pseudouridine at positions 38, 39 and 40 in the anticodon stem and loop of transfer RNAs. The protein is tRNA pseudouridine synthase A of Francisella tularensis subsp. mediasiatica (strain FSC147).